The sequence spans 206 residues: Adenylyl-sulfate kinase (206 aa).

31 to 38 (GLSASGKS) serves as a coordination point for ATP. The active-site Phosphoserine intermediate is Ser105.

It belongs to the APS kinase family.

The enzyme catalyses adenosine 5'-phosphosulfate + ATP = 3'-phosphoadenylyl sulfate + ADP + H(+). The protein operates within sulfur metabolism; hydrogen sulfide biosynthesis; sulfite from sulfate: step 2/3. Its function is as follows. Catalyzes the synthesis of activated sulfate. In Emericella nidulans (strain FGSC A4 / ATCC 38163 / CBS 112.46 / NRRL 194 / M139) (Aspergillus nidulans), this protein is Adenylyl-sulfate kinase (sD).